The chain runs to 609 residues: Protein NRT1/ PTR FAMILY 7.1 (609 aa).

Transmembrane regions (helical) follow at residues 67-87 and 109-129; these read IILL…GVNL and WTGT…SYWG. Thr-133 is subject to Phosphothreonine. 10 consecutive transmembrane segments (helical) span residues 136 to 156, 173 to 193, 216 to 236, 243 to 263, 367 to 387, 402 to 422, 438 to 458, 474 to 494, 516 to 536, and 559 to 579; these read IFQV…WFFL, SSLG…GYGG, FFSY…TILV, LWTE…VAFL, PIWL…SLFV, IPAA…TGIY, MGIG…TEIQ, ILWQ…MYVG, MASM…VMAI, and FYFL…IFAK.

This sequence belongs to the major facilitator superfamily. Proton-dependent oligopeptide transporter (POT/PTR) (TC 2.A.17) family. As to expression, expressed in flowers.

The protein localises to the membrane. In Arabidopsis thaliana (Mouse-ear cress), this protein is Protein NRT1/ PTR FAMILY 7.1 (NPF7.1).